The chain runs to 1152 residues: Calcium-activated potassium channel subunit alpha-1 (1152 aa).

Residues 1–37 (MSSNIHANHLSLDASSSSSSSSSSSSSSSSSSSSVHE) are disordered. Over 1 to 60 (MSSNIHANHLSLDASSSSSSSSSSSSSSSSSSSSVHEPKMDALIIPVTMEVPCDSRGQRM) the chain is Extracellular. Residues 15–34 (SSSSSSSSSSSSSSSSSSSS) show a composition bias toward low complexity. A helical membrane pass occupies residues 61-81 (WWAFLASSMVTFFGGLFIILL). The Cytoplasmic portion of the chain corresponds to 82–152 (WRTLKYLWTV…MISAQTLTGR (71 aa)). 3 S-palmitoyl cysteine lipidation sites follow: C92, C93, and C95. Residues 153-173 (VLVVLVFALSIGALVIYFIDS) traverse the membrane as a helical segment. Topologically, residues 174–188 (SNPIESCQNFYKDFT) are extracellular. A helical transmembrane segment spans residues 189-209 (LQIDMAFNVFFLLYFGLRFIA). Residues 210 to 213 (ANDK) lie on the Cytoplasmic side of the membrane. A helical transmembrane segment spans residues 214-234 (LWFWLEVNSVVDFFTVPPVFV). Topologically, residues 235–238 (SVYL) are extracellular. Residues 239–259 (NRSWLGLRFLRALRLIQFSEI) form a helical; Voltage-sensor membrane-spanning segment. At 260 to 274 (LQFLNILKTSNSIKL) the chain is on the cytoplasmic side. The helical transmembrane segment at 275-295 (VNLLSIFISTWLTAAGFIHLV) threads the bilayer. Residues 296–309 (ENSGDPWENFQNNQ) are Extracellular-facing. The pore-forming intramembrane region spans 310–332 (ALTYWECVYLLMVTMSTVGYGDV). Positions 326 to 329 (TVGY) match the Selectivity for potassium motif. Topologically, residues 333–341 (YAKTTLGRL) are extracellular. Residues 342 to 362 (FMVFFILGGLAMFASYVPEII) form a helical membrane-spanning segment. Over 363-1152 (ELIGNRKKYG…KQKYVQEERL (790 aa)) the chain is Cytoplasmic. The 143-residue stretch at 381 to 523 (RKHIVVCGHI…WNWKEGDDAI (143 aa)) folds into the RCK N-terminal 1 domain. Mg(2+) contacts are provided by E413, Q436, and E438. Residues 530–550 (LGFIAQSCLAQGLSTMLANLF) are segment S7. Positions 587–607 (LSFPTVCELCFVKLKLLMIAI) are segment S8. A heme-binding motif region spans residues 651–655 (CKACH). The disordered stretch occupies residues 675 to 703 (EQPSTLSPKKKQRNGGMRNSPSSSPKLMR). T679 carries the phosphothreonine modification. 3 positions are modified to phosphoserine: S681, S694, and S698. The tract at residues 753 to 773 (VLSGHVVVCIFGDVSSALIGL) is segment S9. The RCK N-terminal 2 domain occupies 755–899 (SGHVVVCIFG…MDRSSPDNSP (145 aa)). T886 is subject to Phosphothreonine. 2 positions are modified to phosphoserine: S894 and S898. The short motif at 919–941 (TELVNDTNVQFLDQDDDDDPDTE) is the Calcium bowl element. Ca(2+)-binding residues include Q928, D931, D934, and D936. The tract at residues 948 to 968 (FACGTAFAVSVLDSLMSATYF) is segment S10. A compositionally biased stretch (low complexity) spans 1102-1127 (RASLSHSSHSSQSSSKKSSSVHSIPS). The interval 1102-1152 (RASLSHSSHSSQSSSKKSSSVHSIPSTANRQNRPKSRESRDKQKYVQEERL) is disordered. Residues 1136–1152 (KSRESRDKQKYVQEERL) are compositionally biased toward basic and acidic residues. Phosphoserine is present on residues S1137 and S1140.

Belongs to the potassium channel family. Calcium-activated (TC 1.A.1.3) subfamily. KCa1.1/KCNMA1 sub-subfamily. As to quaternary structure, homotetramer; which constitutes the calcium-activated potassium channel. Interacts with beta subunits KCNMB1, KCNMB2, KCNMB3 and KCNMB4. Interacts with gamma subunits LRRC26, LRRC38, LRRC52 and LRRC55. Beta and gamma subunits are accessory, and modulate its activity. Interacts with RAB11B. Phosphorylated. Phosphorylation by kinases such as PKA and/or PKG. In smooth muscles, phosphorylation affects its activity. In terms of processing, palmitoylation by ZDHHC22 and ZDHHC23 within the intracellular linker between the S0 and S1 transmembrane domains regulates localization to the plasma membrane. Depalmitoylated by LYPLA1 and LYPLAL1, leading to retard exit from the trans-Golgi network.

It localises to the cell membrane. The catalysed reaction is K(+)(in) = K(+)(out). Ethanol and carbon monoxide-bound heme increase channel activation. Heme inhibits channel activation. Functionally, potassium channel activated by both membrane depolarization or increase in cytosolic Ca(2+) that mediates export of K(+). It is also activated by the concentration of cytosolic Mg(2+). Its activation dampens the excitatory events that elevate the cytosolic Ca(2+) concentration and/or depolarize the cell membrane. It therefore contributes to repolarization of the membrane potential. Plays a key role in controlling excitability in a number of systems, such as regulation of the contraction of smooth muscle, the tuning of hair cells in the cochlea, regulation of transmitter release, and innate immunity. In smooth muscles, its activation by high level of Ca(2+), caused by ryanodine receptors in the sarcoplasmic reticulum, regulates the membrane potential. In cochlea cells, its number and kinetic properties partly determine the characteristic frequency of each hair cell and thereby helps to establish a tonotopic map. Kinetics of KCNMA1 channels are determined by alternative splicing, phosphorylation status and its combination with modulating beta subunits. Highly sensitive to both iberiotoxin (IbTx) and charybdotoxin (CTX). This chain is Calcium-activated potassium channel subunit alpha-1 (KCNMA1), found in Sus scrofa (Pig).